The following is a 233-amino-acid chain: 2,3,4,5-tetrahydropyridine-2,6-dicarboxylate N-acetyltransferase (233 aa).

Belongs to the transferase hexapeptide repeat family. DapH subfamily.

The catalysed reaction is (S)-2,3,4,5-tetrahydrodipicolinate + acetyl-CoA + H2O = L-2-acetamido-6-oxoheptanedioate + CoA. Its pathway is amino-acid biosynthesis; L-lysine biosynthesis via DAP pathway; LL-2,6-diaminopimelate from (S)-tetrahydrodipicolinate (acetylase route): step 1/3. Catalyzes the transfer of an acetyl group from acetyl-CoA to tetrahydrodipicolinate. The protein is 2,3,4,5-tetrahydropyridine-2,6-dicarboxylate N-acetyltransferase of Enterococcus faecalis (strain ATCC 700802 / V583).